The sequence spans 469 residues: Peripherin (469 aa).

2 stretches are compositionally biased toward low complexity: residues 1-18 (MSHP…SYRR) and 27-53 (SPGA…PGSS). The segment at 1–60 (MSHPSGLRSSVSSTSYRRTFGPPPSLSPGAFSYSSSSRFSSSRLLGSASPGSSVRLGSFR) is disordered. The head stretch occupies residues 1–98 (MSHPSGLRSS…FLATRSNEKQ (98 aa)). Tyr-16 bears the 3'-nitrotyrosine mark. A phosphoserine mark is found at Ser-27, Ser-49, and Ser-58. Residues 96-406 (EKQELQELND…KLLEGEESRI (311 aa)) enclose the IF rod domain. Positions 99-131 (ELQELNDRFANFIEKVRFLEQQNAALRGELNQA) are coil 1A. Residues 132–142 (RGQEPARADQL) are linker 1. The coil 1B stretch occupies residues 143 to 238 (CQQELRELRR…KLHEEELRDL (96 aa)). The segment at 239–261 (QLSVESQQVQHVEVEATVKPELT) is linker 2. Positions 262–404 (AALRDIRAQY…YRKLLEGEES (143 aa)) are coil 2. A 3'-nitrotyrosine modification is found at Tyr-378. The interval 405–469 (RISVPVHSFA…SELDKSPQSY (65 aa)) is tail. The segment at 447 to 469 (GEQVVTESQKEQHSELDKSPQSY) is disordered. The residue at position 469 (Tyr-469) is a Phosphotyrosine.

It belongs to the intermediate filament family. Forms homodimers (in vitro). Homopolymerizes into a filamentous network (in vitro). Forms heterodimers with NEFL, NEFM or NEFH (in vitro). Interacts with DST (via C-terminus). Interacts with RAB7A; the interaction is direct. Interacts with PRKCE (via phorbol-ester/DAG-type 2 domain). Post-translationally, phosphorylated; phosphorylation increases after nerve injury in regenerating neurons.

Its subcellular location is the cytoplasm. It is found in the cytoskeleton. The protein localises to the cell projection. The protein resides in the axon. It localises to the perikaryon. Class-III neuronal intermediate filament protein. May form an independent structural network without the involvement of other neurofilaments or may cooperate with the neuronal intermediate filament proteins NEFL, NEFH, NEFM and INA to form a filamentous network. Assembly of the neuronal intermediate filaments may be regulated by RAB7A. Plays a role in the development of unmyelinated sensory neurons. May be involved in axon elongation and axon regeneration after injury. Inhibits neurite extension in type II spiral ganglion neurons in the cochlea. This chain is Peripherin (PRPH), found in Bos taurus (Bovine).